The primary structure comprises 389 residues: P2X purinoceptor 4a (389 aa).

The Cytoplasmic segment spans residues 1–36 (MSESVGCCDSVSQCFFDYYTSKILIIRSKKVGTLNR). A helical transmembrane segment spans residues 37–57 (FTQALVIAYVIGYVCVYNKGY). Topologically, residues 58–343 (QDTDTVLSSV…NIIPTLLNMG (286 aa)) are extracellular. Positions 70 and 72 each coordinate ATP. CTP is bound by residues K70 and K72. N-linked (GlcNAc...) asparagine glycans are attached at residues N78 and N113. Disulfide bonds link C119–C168, C129–C152, and C135–C162. Residue R143 participates in CTP binding. N-linked (GlcNAc...) asparagine glycosylation is present at N187. Residues T189 and L191 each contribute to the ATP site. T189 is a binding site for CTP. The N-linked (GlcNAc...) asparagine glycan is linked to N213. Disulfide bonds link C220–C230 and C264–C273. Residues N296, R298, and K316 each contribute to the ATP site. CTP-binding residues include N296, R298, and K316. The chain crosses the membrane as a helical span at residues 344-364 (AGLALLGLVNVICDWIVLTFM). Residues 365–389 (KRKQHYKEQKYTYVDDFGLLHNEDK) are Cytoplasmic-facing.

This sequence belongs to the P2X receptor family. Functional P2XRs are organized as homomeric and heteromeric trimers. Forms homotrimer.

It is found in the cell membrane. The protein localises to the lysosome membrane. The enzyme catalyses K(+)(in) = K(+)(out). It carries out the reaction Na(+)(in) = Na(+)(out). The catalysed reaction is Ca(2+)(in) = Ca(2+)(out). With respect to regulation, activated by ATP. pH-dependent and inhibited by acidic pH. Its function is as follows. ATP-gated nonselective transmembrane cation channel permeable to potassium, sodium and calcium. CTP, but not GTP or UTP, functions as a weak affinity agonist for P2RX4. Activated by extracellularly released ATP, it plays multiple role in immunity and central nervous system physiology. Could also function as an ATP-gated cation channel of lysosomal membranes. This is P2X purinoceptor 4a (p2rx4a) from Danio rerio (Zebrafish).